The sequence spans 125 residues: Major intrinsically disordered NOTCH2-binding receptor 1-like (125 aa).

Residue Asn-37 is glycosylated (N-linked (GlcNAc...) asparagine). A helical membrane pass occupies residues Phe-100–Val-120.

It belongs to the MINAR family. Interacts with NOTCH2. As to expression, highly expressed in the auditory hair cells.

It localises to the lysosome membrane. The protein localises to the endoplasmic reticulum membrane. Its function is as follows. Binds cholesterol and may regulate the distribution and homeostasis of cholesterol in hair cells. May play a role in angiogenesis. This is Major intrinsically disordered NOTCH2-binding receptor 1-like from Danio rerio (Zebrafish).